A 208-amino-acid chain; its full sequence is Urease accessory protein UreG 1 (208 aa).

Residue 14-21 (GPVGSGKT) coordinates GTP.

This sequence belongs to the SIMIBI class G3E GTPase family. UreG subfamily. In terms of assembly, homodimer. UreD, UreF and UreG form a complex that acts as a GTP-hydrolysis-dependent molecular chaperone, activating the urease apoprotein by helping to assemble the nickel containing metallocenter of UreC. The UreE protein probably delivers the nickel.

Its subcellular location is the cytoplasm. Functionally, facilitates the functional incorporation of the urease nickel metallocenter. This process requires GTP hydrolysis, probably effectuated by UreG. Disruption of the ure1 gene cluster suggests that it protects brucellae during their passage through the stomach. The major route of infection in human brucellosis is oral. This chain is Urease accessory protein UreG 1, found in Brucella abortus (strain 2308).